The chain runs to 99 residues: uncharacterized protein (99 aa).

This is an uncharacterized protein from Haemophilus influenzae (strain ATCC 51907 / DSM 11121 / KW20 / Rd).